The primary structure comprises 575 residues: Membrane protein insertase YidC (575 aa).

A run of 6 helical transmembrane segments spans residues 6–26 (VFLI…WGKD), 357–377 (FSIM…LHSF), 381–401 (WGWA…PLSA), 448–468 (GGCL…WVLV), 490–510 (PYFI…KLTP), and 526–546 (PLVF…YWVV).

It belongs to the OXA1/ALB3/YidC family. Type 1 subfamily. In terms of assembly, interacts with the Sec translocase complex via SecD. Specifically interacts with transmembrane segments of nascent integral membrane proteins during membrane integration.

The protein resides in the cell inner membrane. Its function is as follows. Required for the insertion and/or proper folding and/or complex formation of integral membrane proteins into the membrane. Involved in integration of membrane proteins that insert both dependently and independently of the Sec translocase complex, as well as at least some lipoproteins. Aids folding of multispanning membrane proteins. The protein is Membrane protein insertase YidC of Xanthomonas campestris pv. campestris (strain B100).